A 204-amino-acid chain; its full sequence is Cytochrome P450 monooxygenase PC-23 (204 aa).

Cysteine 138 serves as a coordination point for heme.

This sequence belongs to the cytochrome P450 family. Heme is required as a cofactor.

It participates in secondary metabolite biosynthesis. Its function is as follows. Cytochrome P450 monooxygenase; part of the gene cluster that mediates the biosynthesis of the indole diterpenes penitrems. The geranylgeranyl diphosphate (GGPP) synthase penG catalyzes the first step in penitrem biosynthesis via conversion of farnesyl pyrophosphate and isopentyl pyrophosphate into geranylgeranyl pyrophosphate (GGPP). Condensation of indole-3-glycerol phosphate with GGPP by the prenyl transferase penC then forms 3-geranylgeranylindole (3-GGI). Epoxidation by the FAD-dependent monooxygenase penM leads to a epoxidized-GGI that is substrate of the terpene cyclase penB for cyclization to yield paspaline. Paspaline is subsequently converted to 13-desoxypaxilline by the cytochrome P450 monooxygenase penP, the latter being then converted to paxilline by the cytochrome P450 monooxygenase penQ. Paxilline is converted to beta-paxitriol via C-10 ketoreduction by the short-chain dehydrogenase PC-15 which can be monoprenylated at the C-20 by the indole diterpene prenyltransferase penD. A two-step elimination (acetylation and elimination) process performed by the O-acetyltransferase PC-16 and the P.simplicissimum ptmI-ortholog not yet identified in P.crustosum, leads to the production of the prenylated form of penijanthine. The FAD-linked oxidoreductase ptmO then converts the prenylated form of penijanthine into PC-M5 which is in turn transformed into PC-M4 by the aromatic dimethylallyltransferase PC-22. A series of oxidation steps involving 4 cytochrome P450 monooxygenases (PC-21, PC-05, PC-23, PC-20) and a FAD-dependent monooxygenase (PC-14) are required for the transformation of PC-M4 to penitrems A and E. Synthesis of these final products is proposed to proceed via penitrems D and C (PC-21, PC-05, PC-14) and penitrems B and F (PC-21, PC-05, PC-14, PC-23). The polypeptide is Cytochrome P450 monooxygenase PC-23 (Penicillium crustosum (Blue mold fungus)).